Reading from the N-terminus, the 907-residue chain is Clumping factor B (907 aa).

The signal sequence occupies residues 1-44 (MKKRIDYLSNKQNKYSIRRFTVGTTSVIVGATILFGIGNHQAQA). Positions 15–26 (YSIRRFTVGTTS) match the YSIRK-G/S signaling motif motif. Composition is skewed to polar residues over residues 44–61 (ASEQSNDTTQSSKNNASA) and 68–101 (MIETPQLNTTANDTSDISANTNSANVDSTAKPMS). The interval 44-191 (ASEQSNDTTQ…AQGTSKPSVR (148 aa)) is disordered. Positions 45-542 (SEQSNDTTQS…GSADGDSAVN (498 aa)) are ligand binding A region. Residues 102–119 (TQTSNTTTTEPASTNETP) show a composition bias toward low complexity. Residues 134-189 (QDQTVPQEANSQVDNKTTNDANSIATNSELKNPQTLDLPQSSPQTISNAQGTSKPS) show a composition bias toward polar residues. The MIDAS-like motif signature appears at 272-276 (DYSNS). A disordered region spans residues 530 to 879 (YGGGSADGDS…ETGDKSENTN (350 aa)). Positions 545–555 (DPTPGPPVDPE) are enriched in pro residues. Residues 556 to 831 (PSPDPEPEPS…SDSDSDSDSD (276 aa)) show a composition bias toward acidic residues. Residues 835–846 (RVTPPNNEQKAP) are compositionally biased toward polar residues. The segment covering 863 to 876 (HKTDALPETGDKSE) has biased composition (basic and acidic residues). An LPXTG sorting signal motif is present at residues 868–872 (LPETG). T871 carries the pentaglycyl murein peptidoglycan amidated threonine modification. Positions 872-907 (GDKSENTNATLFGAMMALLGSLLLFRKRKQDHKEKA) are cleaved as a propeptide — removed by sortase.

Belongs to the serine-aspartate repeat-containing protein (SDr) family. Post-translationally, proteolytically cleaved by aureolysin (aur). This cleavage leads to the inactivation of ClfB.

The protein localises to the secreted. It is found in the cell wall. Its function is as follows. Cell surface-associated protein implicated in virulence by promoting bacterial attachment to both alpha- and beta-chains of human fibrinogen and inducing the formation of bacterial clumps. This chain is Clumping factor B (clfB), found in Staphylococcus aureus (strain MW2).